Reading from the N-terminus, the 360-residue chain is Photosystem II protein D1 (360 aa).

A run of 3 helical transmembrane segments spans residues 30–47 (YVGW…AAAA), 119–134 (HFLI…QWEL), and 143–157 (WICV…AAFA). Position 119 (His-119) interacts with chlorophyll a. Position 127 (Tyr-127) interacts with pheophytin a. Positions 171 and 190 each coordinate [CaMn4O5] cluster. A helical membrane pass occupies residues 198-219 (FHMAGVAGMFGGSLFSAMHGSL). His-199 serves as a coordination point for chlorophyll a. Residues His-216 and 265-266 (SF) each bind a quinone. His-216 contacts Fe cation. His-273 contributes to the Fe cation binding site. A helical membrane pass occupies residues 275–289 (FLAVFPVVCVWLTSM). Residues His-333, Glu-334, Asp-343, and Ala-345 each contribute to the [CaMn4O5] cluster site. A propeptide spanning residues 346–360 (AAESTTVALSAPAIG) is cleaved from the precursor.

Belongs to the reaction center PufL/M/PsbA/D family. PSII is composed of 1 copy each of membrane proteins PsbA, PsbB, PsbC, PsbD, PsbE, PsbF, PsbH, PsbI, PsbJ, PsbK, PsbL, PsbM, PsbT, PsbX, PsbY, Psb30/Ycf12, peripheral proteins PsbO, CyanoQ (PsbQ), PsbU, PsbV and a large number of cofactors. It forms dimeric complexes. It depends on The D1/D2 heterodimer binds P680, chlorophylls that are the primary electron donor of PSII, and subsequent electron acceptors. It shares a non-heme iron and each subunit binds pheophytin, quinone, additional chlorophylls, carotenoids and lipids. D1 provides most of the ligands for the Mn4-Ca-O5 cluster of the oxygen-evolving complex (OEC). There is also a Cl(-1) ion associated with D1 and D2, which is required for oxygen evolution. The PSII complex binds additional chlorophylls, carotenoids and specific lipids. as a cofactor. Tyr-162 forms a radical intermediate that is referred to as redox-active TyrZ, YZ or Y-Z. In terms of processing, C-terminally processed by CtpA; processing is essential to allow assembly of the oxygen-evolving complex and thus photosynthetic growth.

It is found in the cellular thylakoid membrane. It catalyses the reaction 2 a plastoquinone + 4 hnu + 2 H2O = 2 a plastoquinol + O2. Functionally, photosystem II (PSII) is a light-driven water:plastoquinone oxidoreductase that uses light energy to abstract electrons from H(2)O, generating O(2) and a proton gradient subsequently used for ATP formation. It consists of a core antenna complex that captures photons, and an electron transfer chain that converts photonic excitation into a charge separation. The D1/D2 (PsbA/PsbD) reaction center heterodimer binds P680, the primary electron donor of PSII as well as several subsequent electron acceptors. The sequence is that of Photosystem II protein D1 from Prochlorococcus marinus (strain MIT 9312).